The chain runs to 611 residues: Translation initiation factor RLI1 (611 aa).

4Fe-4S ferredoxin-type domains lie at 7–31 (RVAIVNSDKCKPKKCRQECKKSCPV) and 46–75 (RIAFISEQLCIGCGICPKRCPFGAITIINL). ABC transporter domains are found at residues 77-318 (TNLE…FLDG) and 345-565 (AEKS…LKNL). Residues 110-117 (GTNGIGKS) and 382-389 (GENGTGKT) contribute to the ATP site.

This sequence belongs to the ABC transporter superfamily. ABCE family. As to quaternary structure, component of the multifactor complex (MFC). The complex associates with pre-initiation complexes.

It is found in the cytoplasm. It localises to the nucleus. In terms of biological role, component of the multifactor complex (MFC) involved in translation initiation. Required for the binding of MFC to the 40S ribosome. Required for the processing and nuclear export of the 60S and 40S ribosomal subunits. The polypeptide is Translation initiation factor RLI1 (RLI1) (Chaetomium thermophilum (strain DSM 1495 / CBS 144.50 / IMI 039719) (Thermochaetoides thermophila)).